A 496-amino-acid polypeptide reads, in one-letter code: UDP-N-acetylmuramoyl-L-alanyl-D-glutamate--2,6-diaminopimelate ligase (496 aa).

Leu-24 and Ser-26 together coordinate UDP-N-acetyl-alpha-D-muramoyl-L-alanyl-D-glutamate. Residue Gly-109 to Ser-115 coordinates ATP. UDP-N-acetyl-alpha-D-muramoyl-L-alanyl-D-glutamate contacts are provided by residues Thr-151–Thr-152, Ser-178, Gln-184, and Arg-186. Residue Lys-218 is modified to N6-carboxylysine. Meso-2,6-diaminopimelate is bound by residues Arg-387, Asp-411–Arg-414, Gly-462, and Glu-466. The Meso-diaminopimelate recognition motif motif lies at Asp-411 to Arg-414.

Belongs to the MurCDEF family. MurE subfamily. Mg(2+) serves as cofactor. Post-translationally, carboxylation is probably crucial for Mg(2+) binding and, consequently, for the gamma-phosphate positioning of ATP.

Its subcellular location is the cytoplasm. It carries out the reaction UDP-N-acetyl-alpha-D-muramoyl-L-alanyl-D-glutamate + meso-2,6-diaminopimelate + ATP = UDP-N-acetyl-alpha-D-muramoyl-L-alanyl-gamma-D-glutamyl-meso-2,6-diaminopimelate + ADP + phosphate + H(+). It functions in the pathway cell wall biogenesis; peptidoglycan biosynthesis. Functionally, catalyzes the addition of meso-diaminopimelic acid to the nucleotide precursor UDP-N-acetylmuramoyl-L-alanyl-D-glutamate (UMAG) in the biosynthesis of bacterial cell-wall peptidoglycan. The sequence is that of UDP-N-acetylmuramoyl-L-alanyl-D-glutamate--2,6-diaminopimelate ligase from Pseudomonas putida (strain ATCC 47054 / DSM 6125 / CFBP 8728 / NCIMB 11950 / KT2440).